Consider the following 420-residue polypeptide: L-cysteine:1D-myo-inositol 2-amino-2-deoxy-alpha-D-glucopyranoside ligase (420 aa).

Cys46 provides a ligand contact to Zn(2+). Residues 46 to 49 (CGIT), Thr61, and 84 to 86 (NVT) contribute to the L-cysteinyl-5'-AMP site. The 'HIGH' region signature appears at 48 to 58 (ITPYDSTHLGH). A 'ERGGDP' region motif is present at residues 194-199 (ERGGDP). Residue Trp235 participates in L-cysteinyl-5'-AMP binding. Cys239 contacts Zn(2+). Residue 257–259 (GTD) coordinates L-cysteinyl-5'-AMP. His264 provides a ligand contact to Zn(2+). Val291 serves as a coordination point for L-cysteinyl-5'-AMP. The 'KMSKS' region motif lies at 297–301 (KMSKS).

The protein belongs to the class-I aminoacyl-tRNA synthetase family. MshC subfamily. In terms of assembly, monomer. Requires Zn(2+) as cofactor.

It catalyses the reaction 1D-myo-inositol 2-amino-2-deoxy-alpha-D-glucopyranoside + L-cysteine + ATP = 1D-myo-inositol 2-(L-cysteinylamino)-2-deoxy-alpha-D-glucopyranoside + AMP + diphosphate + H(+). Its function is as follows. Catalyzes the ATP-dependent condensation of GlcN-Ins and L-cysteine to form L-Cys-GlcN-Ins. The polypeptide is L-cysteine:1D-myo-inositol 2-amino-2-deoxy-alpha-D-glucopyranoside ligase (Beutenbergia cavernae (strain ATCC BAA-8 / DSM 12333 / CCUG 43141 / JCM 11478 / NBRC 16432 / NCIMB 13614 / HKI 0122)).